Reading from the N-terminus, the 826-residue chain is Arsenite oxidase subunit AioA (826 aa).

Positions 22, 25, and 29 each coordinate [3Fe-4S] cluster. Substrate-binding residues include His196, Glu204, Arg419, and His423.

Belongs to the prokaryotic molybdopterin-containing oxidoreductase family. As to quaternary structure, heterodimer consisting of a large and a small subunit. The cofactor is [3Fe-4S] cluster. It depends on Mo-bis(molybdopterin guanine dinucleotide) as a cofactor.

The catalysed reaction is 2 oxidized [azurin] + arsenite + H2O = 2 reduced [azurin] + arsenate + 3 H(+). Its function is as follows. Involved in the detoxification of arsenic. Oxidizes As(III)O3(3-) (arsenite) to the somewhat less toxic As(V)O4(3-) (arsenate). The polypeptide is Arsenite oxidase subunit AioA (aioA) (Herminiimonas arsenicoxydans).